Reading from the N-terminus, the 462-residue chain is MTNFDNLTPKEIVRELDKYIIGQYQAKKAVAIAIRNRIRRQKLPDIWQKEVLPKNILMIGPTGVGKTEIARRLAQLSGSPFLKVEATRFTEVGYVGKNVDSMVRDLVEISVNMVKKERMEQVKDKAEQMVEERILDALIPESRKPQNISFMGLFTASQQQQPSPEERRSLRQKREEIRQKLRNGELENEMIEIEIEKEISPFIGALGQGELEDLGIDLGSMLGSLMPKTRQKKRMTVSEARRTLLPIESEKLIDMDKATQEALERAQNRGIIFIDELDKIAVKSSGSGPDVSRQGVQRDLLPIVEGTTIMTKYGPVRTDYILFIGSGAFHMSRPSDLIPELQGRFPIRVELSSLTRKDFVRILVEPENAITKQYQALLSTEGIELIFTEDGIEEMAKIAYELNQRLENIGARRLYTVVEKVLEEISFEAPDVQEKKIIIDAKYVMGKLENIISDEDVSSYIL.

ATP contacts are provided by residues I21, 63-68, D275, E340, and R412; that span reads GVGKTE.

It belongs to the ClpX chaperone family. HslU subfamily. As to quaternary structure, a double ring-shaped homohexamer of HslV is capped on each side by a ring-shaped HslU homohexamer. The assembly of the HslU/HslV complex is dependent on binding of ATP.

Its subcellular location is the cytoplasm. In terms of biological role, ATPase subunit of a proteasome-like degradation complex; this subunit has chaperone activity. The binding of ATP and its subsequent hydrolysis by HslU are essential for unfolding of protein substrates subsequently hydrolyzed by HslV. HslU recognizes the N-terminal part of its protein substrates and unfolds these before they are guided to HslV for hydrolysis. The polypeptide is ATP-dependent protease ATPase subunit HslU (Pseudothermotoga lettingae (strain ATCC BAA-301 / DSM 14385 / NBRC 107922 / TMO) (Thermotoga lettingae)).